The primary structure comprises 545 residues: CTP synthase (545 aa).

The tract at residues 1-266 (MTTNYIFVTG…DDYICKRFSL (266 aa)) is amidoligase domain. Residue S14 participates in CTP binding. S14 contacts UTP. ATP is bound by residues 15-20 (SLGKGI) and D72. Residues D72 and E140 each contribute to the Mg(2+) site. CTP contacts are provided by residues 147-149 (DIE), 187-192 (KTKPTQ), and K223. UTP-binding positions include 187-192 (KTKPTQ) and K223. 239–241 (KDV) is a binding site for ATP. A Glutamine amidotransferase type-1 domain is found at 291–542 (TIGMVGKYIE…VKAANEHQKR (252 aa)). L-glutamine is bound at residue G352. The active-site Nucleophile; for glutamine hydrolysis is C379. L-glutamine-binding positions include 380 to 383 (LGMQ), E403, and R470. Residues H515 and E517 contribute to the active site.

This sequence belongs to the CTP synthase family. As to quaternary structure, homotetramer.

The enzyme catalyses UTP + L-glutamine + ATP + H2O = CTP + L-glutamate + ADP + phosphate + 2 H(+). It catalyses the reaction L-glutamine + H2O = L-glutamate + NH4(+). It carries out the reaction UTP + NH4(+) + ATP = CTP + ADP + phosphate + 2 H(+). It participates in pyrimidine metabolism; CTP biosynthesis via de novo pathway; CTP from UDP: step 2/2. Its activity is regulated as follows. Allosterically activated by GTP, when glutamine is the substrate; GTP has no effect on the reaction when ammonia is the substrate. The allosteric effector GTP functions by stabilizing the protein conformation that binds the tetrahedral intermediate(s) formed during glutamine hydrolysis. Inhibited by the product CTP, via allosteric rather than competitive inhibition. Catalyzes the ATP-dependent amination of UTP to CTP with either L-glutamine or ammonia as the source of nitrogen. Regulates intracellular CTP levels through interactions with the four ribonucleotide triphosphates. The polypeptide is CTP synthase (Salmonella newport (strain SL254)).